Reading from the N-terminus, the 634-residue chain is Probable potassium transport system protein Kup 1 (634 aa).

12 consecutive transmembrane segments (helical) span residues 20–40 (FLTL…TSPL), 64–84 (VMSL…VLLI), 110–130 (FAAI…DAII), 148–168 (PVFD…LFVV), 176–196 (VAAW…LGGI), 224–244 (AGLL…ALYA), 256–276 (FAWF…QGAM), 290–310 (FLFP…ATII), 348–368 (IYIP…VFAF), 377–397 (AYGI…YFVM), 405–425 (VATS…FLMA), and 430–450 (IFEG…VMIT).

This sequence belongs to the HAK/KUP transporter (TC 2.A.72) family.

The protein resides in the cell inner membrane. The enzyme catalyses K(+)(in) + H(+)(in) = K(+)(out) + H(+)(out). In terms of biological role, transport of potassium into the cell. Likely operates as a K(+):H(+) symporter. The polypeptide is Probable potassium transport system protein Kup 1 (Rhodopseudomonas palustris (strain BisB5)).